The chain runs to 339 residues: Homeobox protein DBX2 (339 aa).

Residues 186–245 (GILRRAVFSEDQRKALEKMFQKQKYISKTDRKKLAINLGLKESQVKIWFQNRRMKWRNSK) constitute a DNA-binding region (homeobox). A disordered region spans residues 282-318 (VPQQHSSPRWRENSPEPSERLIQESSGAPPPEANSLQ). Basic and acidic residues predominate over residues 290 to 303 (RWRENSPEPSERLI).

The protein belongs to the H2.0 homeobox family.

Its subcellular location is the nucleus. In Homo sapiens (Human), this protein is Homeobox protein DBX2 (DBX2).